The primary structure comprises 542 residues: Glucose-6-phosphate isomerase (542 aa).

The active-site Proton donor is glutamate 353. Catalysis depends on residues histidine 384 and lysine 508.

The protein belongs to the GPI family.

The protein resides in the cytoplasm. It catalyses the reaction alpha-D-glucose 6-phosphate = beta-D-fructose 6-phosphate. The protein operates within carbohydrate biosynthesis; gluconeogenesis. It functions in the pathway carbohydrate degradation; glycolysis; D-glyceraldehyde 3-phosphate and glycerone phosphate from D-glucose: step 2/4. In terms of biological role, catalyzes the reversible isomerization of glucose-6-phosphate to fructose-6-phosphate. The sequence is that of Glucose-6-phosphate isomerase from Corynebacterium efficiens (strain DSM 44549 / YS-314 / AJ 12310 / JCM 11189 / NBRC 100395).